Here is a 723-residue protein sequence, read N- to C-terminus: Translation initiation factor IF-2 (723 aa).

Residues 112 to 138 are disordered; that stretch reads KIFNNKKNKKQKPQQAPQQEVQKKKEK. Residues 114 to 123 are compositionally biased toward basic residues; it reads FNNKKNKKQK. The tr-type G domain maps to 224-393; that stretch reads ERPPVVTIMG…LLVSEMEELK (170 aa). Residues 233 to 240 form a G1 region; it reads GHVDHGKT. 233 to 240 contributes to the GTP binding site; the sequence is GHVDHGKT. The interval 258-262 is G2; sequence GITQH. Residues 279 to 282 form a G3 region; it reads DTPG. GTP-binding positions include 279–283 and 333–336; these read DTPGH and NKID. The segment at 333–336 is G4; the sequence is NKID. Residues 369 to 371 are G5; the sequence is SAL.

The protein belongs to the TRAFAC class translation factor GTPase superfamily. Classic translation factor GTPase family. IF-2 subfamily.

It is found in the cytoplasm. Its function is as follows. One of the essential components for the initiation of protein synthesis. Protects formylmethionyl-tRNA from spontaneous hydrolysis and promotes its binding to the 30S ribosomal subunits. Also involved in the hydrolysis of GTP during the formation of the 70S ribosomal complex. The sequence is that of Translation initiation factor IF-2 from Anoxybacillus flavithermus (strain DSM 21510 / WK1).